Here is a 397-residue protein sequence, read N- to C-terminus: Staphylopine export protein (397 aa).

Transmembrane regions (helical) follow at residues 12-32 (LYIL…FIPL), 38-58 (GATN…AMVF), 77-97 (IILI…LEGY), 102-122 (VMQG…IIDA), 134-154 (LYSL…VGIW), 158-178 (NISL…FFGY), 217-237 (GIIM…VPLY), 239-259 (VSLG…AVVA), 285-305 (LLVI…IIFY), 309-329 (ILIG…LSFV), 337-357 (MLLG…GALM), and 363-383 (LVGF…IMIM).

The protein belongs to the major facilitator superfamily.

The protein resides in the cell membrane. Functionally, involved in the export of the metallophore staphylopine. The sequence is that of Staphylopine export protein from Staphylococcus aureus (strain Mu50 / ATCC 700699).